The chain runs to 471 residues: Coagulation factor IX (471 aa).

The N-terminal stretch at 1–28 (MKHLNTVMAESPALITIFLLGYLLSTEC) is a signal peptide. A propeptide spanning residues 29 to 46 (AVFLDRENATKILTRPKR) is cleaved from the precursor. Positions 47, 48, 53, 54, 61, 63, 66, 67, 72, 73, and 76 each coordinate Ca(2+). Residues 47–92 (YNSGKLEEFVRGNLERECIEERCSFEEAREVFENTEKTTEFWKQYV) form the Gla domain. 4-carboxyglutamate is present on residues Glu53, Glu54, Glu61, Glu63, Glu66, Glu67, Glu72, Glu73, Glu76, Glu79, and Glu82. Glu61 provides a ligand contact to Mg(2+). Cys64 and Cys69 are disulfide-bonded. Position 66 (Glu66) interacts with Mg(2+). Glu72 is a binding site for Mg(2+). Glu76 contributes to the Mg(2+) binding site. Glu82 lines the Ca(2+) pocket. Residue Glu82 coordinates Mg(2+). Thr85 carries O-linked (GalNAc...) threonine glycosylation. Ca(2+)-binding residues include Glu86, Asp93, Gly94, and Gln96. Glu86 bears the 4-carboxyglutamate mark. Mg(2+) is bound at residue Glu86. Positions 93–129 (DGDQCESNPCLNGGICKDDISSYECWCQVGFEGRNCE) constitute an EGF-like 1; calcium-binding domain. 10 disulfides stabilise this stretch: Cys97/Cys108, Cys102/Cys117, Cys119/Cys128, Cys134/Cys145, Cys141/Cys155, Cys157/Cys170, Cys178/Cys345, Cys262/Cys278, Cys392/Cys406, and Cys417/Cys445. O-linked (Glc...) serine glycosylation occurs at Ser99. Residues Asp110 and Asp111 each coordinate Ca(2+). A (3R)-3-hydroxyaspartate modification is found at Asp110. Ser114 is subject to Phosphoserine. The EGF-like 2 domain occupies 130-171 (LDATCNIKNGRCKQFCKNSPDNKVICSCTEGYQLAEDQKSCE). Positions 193 to 236 (AETVFSNMDYENSTEAVFIQDDITDGAILNNVTESSESLNDFTR) are cleaved as a propeptide — activation peptide. Tyr202 is modified (sulfotyrosine). The N-linked (GlcNAc...) asparagine glycan is linked to Asn204. Residue Ser205 is modified to Phosphoserine. Thr206 bears the Phosphothreonine; alternate mark. An O-linked (GalNAc...) threonine; alternate glycan is attached at Thr206. N-linked (GlcNAc...) asparagine glycosylation occurs at Asn223. 2 O-linked (GalNAc...) threonine glycosylation sites follow: Thr225 and Thr235. In terms of domain architecture, Peptidase S1 spans 237–469 (VVGGENAKPG…YVNWIKEKTK (233 aa)). The active-site Charge relay system is the His277. Ca(2+)-binding residues include Glu291, Asn293, Glu298, and Glu301. The active-site Charge relay system is Asp325. The active-site Charge relay system is Ser421.

The protein belongs to the peptidase S1 family. Heterodimer of a light chain and a heavy chain; disulfide-linked. Interacts (inactive and activated) with F11 (activated) in calcium-dependent manner. Interacts with SERPINC1. Activated by factor XIa, which excises the activation peptide. The propeptide can also be removed by snake venom protease. Activated by coagulation factor VIIa-tissue factor (F7-F3) complex in calcium-dependent manner. In terms of processing, the iron and 2-oxoglutarate dependent 3-hydroxylation of aspartate and asparagine is (R) stereospecific within EGF domains. Post-translationally, predominantly O-glucosylated at Ser-99 by POGLUT1 in vitro. As to expression, detected in liver.

The protein localises to the secreted. The catalysed reaction is Selective cleavage of Arg-|-Ile bond in factor X to form factor Xa.. In terms of biological role, factor IX is a vitamin K-dependent plasma protein that participates in the intrinsic pathway of blood coagulation by converting factor X to its active form in the presence of Ca(2+) ions, phospholipids, and factor VIIIa. The sequence is that of Coagulation factor IX (F9) from Mus musculus (Mouse).